The chain runs to 527 residues: MNGDLNSWDKFCNYLWFDNKLNIWLDISKISFTRKEIDNLEEKFIDVFSSINELENGAISNIDENRQVGHYWLRNPSISPSSKIEEEICADINEISEFGKQILNGDIKNKNNQKYTDVLWIGIGGSGLGPILITDSLQKSSRGLNFSYIDNVDPFLISERLEELSEKLSTTLFVVVSKSGGTPEPRIAMEIIKSHCENNSLEWNSNAIAITMKDSKLFKKATSENWLKIFNLQDWVGGRTSITSSVGLLPLALINENIFEFIRGASLMDEATRTVDFKNNPAALLSSAWYLTGDGIGKRDMVVLPYRDRLQVFSKYLQQLVMESLGKKFNRKGEVVNQGISVFGNKGSTDQHAYVQQLRDGIDNFFCIFIELLDSPSTSIFDKKENPKEYLSGFLQGTRSALSSENRQSITITLEKLNCFSLGALIALFERAVSFYAELVNINAYDQPGVEAGKKAAANIIEYQQKVRNLLDEGGEYSINDITSLFDNSVSEPIFFILREMCFGNDNYLVKGDWSNPNSLVIQKINS.

Residue E323 is the Proton donor of the active site. Catalysis depends on residues H352 and K454.

Belongs to the GPI family.

It localises to the cytoplasm. It catalyses the reaction alpha-D-glucose 6-phosphate = beta-D-fructose 6-phosphate. Its pathway is carbohydrate biosynthesis; gluconeogenesis. The protein operates within carbohydrate degradation; glycolysis; D-glyceraldehyde 3-phosphate and glycerone phosphate from D-glucose: step 2/4. Catalyzes the reversible isomerization of glucose-6-phosphate to fructose-6-phosphate. In Prochlorococcus marinus (strain MIT 9215), this protein is Glucose-6-phosphate isomerase.